The sequence spans 88 residues: Kunitz-type U15-theraphotoxin-Hs1e (88 aa).

The N-terminal stretch at 1-27 (MGTARFLSAVLLLSVLLMVTFPALLSA) is a signal peptide. Residues 28 to 33 (EYHDGR) constitute a propeptide that is removed on maturation. The BPTI/Kunitz inhibitor domain maps to 37–85 (CSLPSDSGDRLRFFEMWYFDGTTCTKFVYGGYGGNDNRFPTEKACMKRC). Cystine bridges form between cysteine 37–cysteine 85 and cysteine 60–cysteine 81.

It belongs to the venom Kunitz-type family. 03 (sub-Kunitz) subfamily. As to expression, expressed by the venom gland.

It localises to the secreted. Serine protease inhibitor that inhibits trypsin (Ki=9.61 nM), kallikrein (Ki=24.8 nM), and chymotrypsin. In Cyriopagopus schmidti (Chinese bird spider), this protein is Kunitz-type U15-theraphotoxin-Hs1e.